Here is a 367-residue protein sequence, read N- to C-terminus: Serine/threonine-protein kinase Sgk2 (367 aa).

The disordered stretch occupies residues 1–28; sequence MASSPVGVPSPQPSRANGNINLGPSANP. A Phosphoserine modification is found at Ser-10. The segment covering 15–28 has biased composition (polar residues); that stretch reads RANGNINLGPSANP. A Protein kinase domain is found at 35 to 292; that stretch reads FDFLKVIGKG…FLDIKNHMFF (258 aa). ATP-binding positions include 41-49 and Lys-64; that span reads IGKGNYGKV. A Nuclear localization signal motif is present at residues 68–77; it reads KKSILKNKEQ. Catalysis depends on Asp-159, which acts as the Proton acceptor. Thr-193 carries the phosphothreonine; by PDPK1 modification. The AGC-kinase C-terminal domain occupies 293-367; that stretch reads SPINWDDLYH…AQDDDDILDS (75 aa). Residues Ser-334 and Ser-356 each carry the phosphoserine modification. Tyr-357 bears the Phosphotyrosine mark.

The protein belongs to the protein kinase superfamily. AGC Ser/Thr protein kinase family. In terms of processing, activated by phosphorylation on Ser-356 by an unknown kinase (may be mTORC2 but not confirmed), transforming it into a substrate for PDPK1 which then phosphorylates it on Thr-193. As to expression, expressed in the proximal tubule and thick ascending limb of the loop of Henle (TALH).

It is found in the cytoplasm. It localises to the nucleus. It catalyses the reaction L-seryl-[protein] + ATP = O-phospho-L-seryl-[protein] + ADP + H(+). It carries out the reaction L-threonyl-[protein] + ATP = O-phospho-L-threonyl-[protein] + ADP + H(+). With respect to regulation, two specific sites, one in the kinase domain (Thr-193) and the other in the C-terminal regulatory region (Ser-356), need to be phosphorylated for its full activation. Functionally, serine/threonine-protein kinase which is involved in the regulation of a wide variety of ion channels, membrane transporters, cell growth, survival and proliferation. Up-regulates Na(+) channels: SCNN1A/ENAC, K(+) channels: KCNA3/Kv1.3, KCNE1 and KCNQ1, amino acid transporter: SLC6A19, glutamate transporter: SLC1A6/EAAT4, glutamate receptors: GRIA1/GLUR1 and GRIK2/GLUR6, Na(+)/H(+) exchanger: SLC9A3/NHE3, and the Na(+)/K(+) ATPase. In Rattus norvegicus (Rat), this protein is Serine/threonine-protein kinase Sgk2 (Sgk2).